We begin with the raw amino-acid sequence, 193 residues long: uncharacterized protein (193 aa).

The tract at residues 1 to 144 (MEKKRTLSVN…NNNNNNEGTI (144 aa)) is disordered. The span at 29–86 (NSLNNIENNECNNNNNNNNNNNNNNSNSNNLNNSNNNNINTSSNSINSSNSINNSIDN) shows a compositional bias: low complexity. The span at 103 to 118 (KMNSSQEFQSYLTPNK) shows a compositional bias: polar residues. Residues 119 to 140 (NNNNRNNNNRNNNNNNNNNNNN) are compositionally biased toward low complexity. A helical membrane pass occupies residues 158-180 (YMIRPFLVGASASFGISIGMFYF).

The protein resides in the membrane. This is an uncharacterized protein from Dictyostelium discoideum (Social amoeba).